The chain runs to 155 residues: MSQVILDLQLACEDNSGLPEESQFQTWLNAVIPQFQEESEVTIRVVDTAESHCLNLTYRGKDKPTNVLSFPFEVPPGMEMSLLGDLIICRQVVEKEAQEQGKPLEAHWAHMVVHGSLHLLGYDHIEDDEAEEMEAIETEIMLALGYEDPYIAEKE.

The Zn(2+) site is built by histidine 114, histidine 118, and histidine 124.

The protein belongs to the endoribonuclease YbeY family. Zn(2+) is required as a cofactor.

The protein localises to the cytoplasm. In terms of biological role, single strand-specific metallo-endoribonuclease involved in late-stage 70S ribosome quality control and in maturation of the 3' terminus of the 16S rRNA. This Escherichia coli O81 (strain ED1a) protein is Endoribonuclease YbeY.